We begin with the raw amino-acid sequence, 146 residues long: Endoribonuclease YbeY (146 aa).

3 residues coordinate Zn(2+): H108, H112, and H118.

This sequence belongs to the endoribonuclease YbeY family. Zn(2+) is required as a cofactor.

It is found in the cytoplasm. In terms of biological role, single strand-specific metallo-endoribonuclease involved in late-stage 70S ribosome quality control and in maturation of the 3' terminus of the 16S rRNA. This is Endoribonuclease YbeY from Aster yellows witches'-broom phytoplasma (strain AYWB).